The primary structure comprises 256 residues: MAVGKNKRLSKGKKGLKKKAVDPFARKEWFDIKAPSTFENRNVGKTLINKSTGLKNAADGLKGRVFEVCLADLQGSEDHSYRKVKLRVDEVQGKNLLTNFHGLDFTSDKLRSLVRKWQSLVEANVTVKTADDYVLRVFAIAFTKRQANQVKKTTYAQSSKLREVRKKMIEIMQREVSNVTLAQLTSKLIPEVIGREIEKSTQSILPLQNIHIRKVKLLKQPKFDLGSLLALHGEGSTEEKGKKVSSGYKDVVLESV.

Alanine 2 is modified (N-acetylalanine; partial).

The protein belongs to the eukaryotic ribosomal protein eS1 family. As to quaternary structure, component of the small ribosomal subunit. Mature ribosomes consist of a small (40S) and a large (60S) subunit. The 40S subunit contains about 33 different proteins and 1 molecule of RNA (18S). The 60S subunit contains about 49 different proteins and 3 molecules of RNA (25S, 5.8S and 5S).

The protein localises to the cytoplasm. This is Small ribosomal subunit protein eS1B from Clavispora lusitaniae (strain ATCC 42720) (Yeast).